A 187-amino-acid polypeptide reads, in one-letter code: Protein GrpE (187 aa).

Residues 1-26 are disordered; sequence MHDPKESLETNIQETESQEKLPETPI.

The protein belongs to the GrpE family. In terms of assembly, homodimer.

It localises to the cytoplasm. Its function is as follows. Participates actively in the response to hyperosmotic and heat shock by preventing the aggregation of stress-denatured proteins, in association with DnaK and GrpE. It is the nucleotide exchange factor for DnaK and may function as a thermosensor. Unfolded proteins bind initially to DnaJ; upon interaction with the DnaJ-bound protein, DnaK hydrolyzes its bound ATP, resulting in the formation of a stable complex. GrpE releases ADP from DnaK; ATP binding to DnaK triggers the release of the substrate protein, thus completing the reaction cycle. Several rounds of ATP-dependent interactions between DnaJ, DnaK and GrpE are required for fully efficient folding. This is Protein GrpE from Dichelobacter nodosus (strain VCS1703A).